A 345-amino-acid polypeptide reads, in one-letter code: MSNYWLNIYKPRGISSAQLVSIVKKILGKTKIGHAGTLDVEAEGILPFAVGEATKLIHLLIDARKTYIFTIKFGMQTNSGDCAGKVIATKDCIPSQEEAYAVCSKFIGNVTQIPPAFSALKVNGVRAYKLAREGKKVELKPRNITIYDLKCLNFDEKNATATYYTECSKGTYIRTLAEDLALSLQSLGFVIELRRTQVGIFKEENAIRIKSPDEITKNALEEKSIKIEAILDDILVLDATDSQAQQIKYGQKCLFNYEKDFRHLAKFAYREEFKGNTERSTTAYTLVREDASTGLTYKLPLEVEFGKMSVDLLWVRYKGTLLAIGSLNKSCFNSLRVFNLTQDFF.

The Nucleophile role is filled by aspartate 39.

It belongs to the pseudouridine synthase TruB family. Type 1 subfamily.

It carries out the reaction uridine(55) in tRNA = pseudouridine(55) in tRNA. Responsible for synthesis of pseudouridine from uracil-55 in the psi GC loop of transfer RNAs. In Rickettsia africae (strain ESF-5), this protein is tRNA pseudouridine synthase B.